The following is a 138-amino-acid chain: Sec-independent protein translocase protein TatB (138 aa).

The chain crosses the membrane as a helical span at residues Met-1–Gly-21. Residues Met-74–Asp-138 form a disordered region. A compositionally biased stretch (low complexity) spans Gln-83–Ala-97. Over residues Arg-98–Asp-138 the composition is skewed to basic and acidic residues.

It belongs to the TatB family. In terms of assembly, the Tat system comprises two distinct complexes: a TatABC complex, containing multiple copies of TatA, TatB and TatC subunits, and a separate TatA complex, containing only TatA subunits. Substrates initially bind to the TatABC complex, which probably triggers association of the separate TatA complex to form the active translocon.

The protein localises to the cell inner membrane. In terms of biological role, part of the twin-arginine translocation (Tat) system that transports large folded proteins containing a characteristic twin-arginine motif in their signal peptide across membranes. Together with TatC, TatB is part of a receptor directly interacting with Tat signal peptides. TatB may form an oligomeric binding site that transiently accommodates folded Tat precursor proteins before their translocation. The polypeptide is Sec-independent protein translocase protein TatB (Erythrobacter litoralis (strain HTCC2594)).